The chain runs to 364 residues: Aminomethyltransferase (364 aa).

It belongs to the GcvT family. The glycine cleavage system is composed of four proteins: P, T, L and H.

The catalysed reaction is N(6)-[(R)-S(8)-aminomethyldihydrolipoyl]-L-lysyl-[protein] + (6S)-5,6,7,8-tetrahydrofolate = N(6)-[(R)-dihydrolipoyl]-L-lysyl-[protein] + (6R)-5,10-methylene-5,6,7,8-tetrahydrofolate + NH4(+). Its function is as follows. The glycine cleavage system catalyzes the degradation of glycine. The polypeptide is Aminomethyltransferase (Thermotoga maritima (strain ATCC 43589 / DSM 3109 / JCM 10099 / NBRC 100826 / MSB8)).